A 169-amino-acid polypeptide reads, in one-letter code: Menaquinol:cytochrome c reductase iron-sulfur subunit (169 aa).

One can recognise a Rieske domain in the interval 62 to 160 (EPKRFDFKVK…FEVKDGKLYL (99 aa)). [2Fe-2S] cluster-binding residues include cysteine 102, histidine 104, cysteine 123, and histidine 126. Residues cysteine 107 and cysteine 125 are joined by a disulfide bond.

Belongs to the Rieske iron-sulfur protein family. In terms of assembly, the main subunits of the menaquinol:cytochrome c complex are a Rieske-type iron-sulfur protein (QcrA), a cytochrome b (QcrB) and a cytochrome c (QcrC). [2Fe-2S] cluster is required as a cofactor.

Functionally, component of the menaquinol:cytochrome c reductase complex. The Rieske protein is a high potential 2Fe-2S protein. The sequence is that of Menaquinol:cytochrome c reductase iron-sulfur subunit (qcrA) from Geobacillus thermodenitrificans.